A 567-amino-acid chain; its full sequence is MSLTKKASEPKLSGTSIKPTTLNPHAAEFVPFTLRSPSSGGTSTLDTRLLASSSSVGKAVLDRTESSASHHSDEEARQFWSHQLPDDITPDFGLMTQDDNSYGSGSLSLANLSLFDGNEAEKFPSASGGYGFSDQTGLASHNANGNSLADKSRYPISSFGEDPQRQSFMQLSPKPWDKQIMNAEQLLGNDRERNPFSGKSRHGFVNDMITESPGDMEVNPVDFLASQFPGFAAESLAEVYFANGCDLQLTIEMLTQLELQVDGGLNQNISPKTYAPPSLTPMDFPALSISNSHGIPAQFGGDDLQQTGNHYQSPEKDNMFFFKSGPSVSQPGAIDYVSAVRKLASQDSGMWKYERNDSADSSIGSSRNSGAYKSGRGRSIYSDKLQSRAQTRPAPVWVETGDAVGNMYSELREEARDYARLRNVYFEQARQAYLVGNKALAKELSVKGQLHNMQMKAAHGKAQEAIYRQRNPVGQGNSRGNERMIDLHGLHVSEALQVLKHELSVLRSTARATQERLQIYICVGTGHHTRGSRTPARLPVAVQRYLLEEEGLDYSEPQAGLLRVIIY.

The tract at residues 1-22 is disordered; it reads MSLTKKASEPKLSGTSIKPTTL. Over residues 13 to 22 the composition is skewed to polar residues; sequence SGTSIKPTTL. Positions 21–31 match the PAM2-like motif; sequence TLNPHAAEFVP. In terms of domain architecture, CUE spans 215–259; the sequence is DMEVNPVDFLASQFPGFAAESLAEVYFANGCDLQLTIEMLTQLEL. A disordered region spans residues 355 to 387; sequence RNDSADSSIGSSRNSGAYKSGRGRSIYSDKLQS. Residues 359-371 show a composition bias toward polar residues; it reads ADSSIGSSRNSGA. Positions 485-567 constitute a Smr domain; sequence IDLHGLHVSE…QAGLLRVIIY (83 aa).

Interacts with MPC and PAB2. In terms of tissue distribution, expressed in cauline leaves, stems, rosette leaves, immature siliques and primary inflorescences.

The polypeptide is Polyadenylate-binding protein-interacting protein 7 (CID7) (Arabidopsis thaliana (Mouse-ear cress)).